Here is a 189-residue protein sequence, read N- to C-terminus: Elongation factor P 2 (189 aa).

The protein belongs to the elongation factor P family.

The protein localises to the cytoplasm. It participates in protein biosynthesis; polypeptide chain elongation. Functionally, involved in peptide bond synthesis. Stimulates efficient translation and peptide-bond synthesis on native or reconstituted 70S ribosomes in vitro. Probably functions indirectly by altering the affinity of the ribosome for aminoacyl-tRNA, thus increasing their reactivity as acceptors for peptidyl transferase. This Mesorhizobium japonicum (strain LMG 29417 / CECT 9101 / MAFF 303099) (Mesorhizobium loti (strain MAFF 303099)) protein is Elongation factor P 2.